Here is an 85-residue protein sequence, read N- to C-terminus: Coiled-coil-helix-coiled-coil-helix domain-containing protein 7 (85 aa).

The CHCH domain occupies 13-55; sequence INPCLSESDASTRCLDENNYDRERCSTYFLRYKNCRRFWNSIV. Short sequence motifs (cx9C motif) lie at residues 16 to 26 and 37 to 47; these read CLSESDASTRC and CSTYFLRYKNC. Cystine bridges form between Cys-16–Cys-47 and Cys-26–Cys-37.

Belongs to the CHCHD7 family. Monomer.

Its subcellular location is the mitochondrion intermembrane space. In Homo sapiens (Human), this protein is Coiled-coil-helix-coiled-coil-helix domain-containing protein 7 (CHCHD7).